Reading from the N-terminus, the 689-residue chain is Glycine--tRNA ligase beta subunit (689 aa).

The protein belongs to the class-II aminoacyl-tRNA synthetase family. Tetramer of two alpha and two beta subunits.

It localises to the cytoplasm. The catalysed reaction is tRNA(Gly) + glycine + ATP = glycyl-tRNA(Gly) + AMP + diphosphate. This is Glycine--tRNA ligase beta subunit from Pectobacterium atrosepticum (strain SCRI 1043 / ATCC BAA-672) (Erwinia carotovora subsp. atroseptica).